The primary structure comprises 408 residues: CinA-like protein (408 aa).

It belongs to the CinA family.

This chain is CinA-like protein, found in Anaeromyxobacter dehalogenans (strain 2CP-1 / ATCC BAA-258).